The chain runs to 317 residues: Beta-ketoacyl-[acyl-carrier-protein] synthase III (317 aa).

Active-site residues include cysteine 112 and histidine 244. Residues 245–249 (QANLR) form an ACP-binding region. Asparagine 274 is a catalytic residue.

Belongs to the thiolase-like superfamily. FabH family. As to quaternary structure, homodimer.

The protein localises to the cytoplasm. It catalyses the reaction malonyl-[ACP] + acetyl-CoA + H(+) = 3-oxobutanoyl-[ACP] + CO2 + CoA. Its pathway is lipid metabolism; fatty acid biosynthesis. In terms of biological role, catalyzes the condensation reaction of fatty acid synthesis by the addition to an acyl acceptor of two carbons from malonyl-ACP. Catalyzes the first condensation reaction which initiates fatty acid synthesis and may therefore play a role in governing the total rate of fatty acid production. Possesses both acetoacetyl-ACP synthase and acetyl transacylase activities. Its substrate specificity determines the biosynthesis of branched-chain and/or straight-chain of fatty acids. The protein is Beta-ketoacyl-[acyl-carrier-protein] synthase III of Enterobacter sp. (strain 638).